Here is a 33-residue protein sequence, read N- to C-terminus: Large ribosomal subunit protein uL24 (33 aa).

It belongs to the universal ribosomal protein uL24 family. In terms of assembly, component of the large ribosomal subunit.

It localises to the cytoplasm. In terms of biological role, component of the large ribosomal subunit. The ribosome is a large ribonucleoprotein complex responsible for the synthesis of proteins in the cell. This Xenopus laevis (African clawed frog) protein is Large ribosomal subunit protein uL24 (rpl26).